Consider the following 319-residue polypeptide: MTPMKIILAAPRGFCAGVNMAIDSLDLTLQKFGPPVYVYHEIVHNQFVVKTFREKGAVFVDTIDEVPEGGVLLFSAHGVSPEIRKAAQARKLHALDATCPLVTKVHLEAIKYAKAGYTIILIGHEGHDEVLGTMGEAPEAIVLVEDEADVDRLEFEPGTQLAYLTQTTLSVDDAGRVIRRLRERFPEIHSPPKDDICYATQNRQEAVKLLREDADVIVVLGSQNSSNSQRLKELAAEQGKRAMLVDGPQDLAVDQFSDDDRVLITAGASAPESVVQSTIDWLKENFDASVDTQVVREEDVQFPLPKPLRAFAAEQAAAK.

Cys15 serves as a coordination point for [4Fe-4S] cluster. 2 residues coordinate (2E)-4-hydroxy-3-methylbut-2-enyl diphosphate: His44 and His77. Dimethylallyl diphosphate-binding residues include His44 and His77. Isopentenyl diphosphate-binding residues include His44 and His77. Cys99 contacts [4Fe-4S] cluster. Position 127 (His127) interacts with (2E)-4-hydroxy-3-methylbut-2-enyl diphosphate. His127 contributes to the dimethylallyl diphosphate binding site. Isopentenyl diphosphate is bound at residue His127. Glu129 acts as the Proton donor in catalysis. Residue Thr167 coordinates (2E)-4-hydroxy-3-methylbut-2-enyl diphosphate. Cys197 contacts [4Fe-4S] cluster. Ser225, Ser226, Asn227, and Ser269 together coordinate (2E)-4-hydroxy-3-methylbut-2-enyl diphosphate. Dimethylallyl diphosphate is bound by residues Ser225, Ser226, Asn227, and Ser269. Residues Ser225, Ser226, Asn227, and Ser269 each coordinate isopentenyl diphosphate.

The protein belongs to the IspH family. Requires [4Fe-4S] cluster as cofactor.

It carries out the reaction isopentenyl diphosphate + 2 oxidized [2Fe-2S]-[ferredoxin] + H2O = (2E)-4-hydroxy-3-methylbut-2-enyl diphosphate + 2 reduced [2Fe-2S]-[ferredoxin] + 2 H(+). It catalyses the reaction dimethylallyl diphosphate + 2 oxidized [2Fe-2S]-[ferredoxin] + H2O = (2E)-4-hydroxy-3-methylbut-2-enyl diphosphate + 2 reduced [2Fe-2S]-[ferredoxin] + 2 H(+). Its pathway is isoprenoid biosynthesis; dimethylallyl diphosphate biosynthesis; dimethylallyl diphosphate from (2E)-4-hydroxy-3-methylbutenyl diphosphate: step 1/1. It functions in the pathway isoprenoid biosynthesis; isopentenyl diphosphate biosynthesis via DXP pathway; isopentenyl diphosphate from 1-deoxy-D-xylulose 5-phosphate: step 6/6. In terms of biological role, catalyzes the conversion of 1-hydroxy-2-methyl-2-(E)-butenyl 4-diphosphate (HMBPP) into a mixture of isopentenyl diphosphate (IPP) and dimethylallyl diphosphate (DMAPP). Acts in the terminal step of the DOXP/MEP pathway for isoprenoid precursor biosynthesis. The protein is 4-hydroxy-3-methylbut-2-enyl diphosphate reductase of Rhodopirellula baltica (strain DSM 10527 / NCIMB 13988 / SH1).